The following is a 302-amino-acid chain: Endochitinase 2 (302 aa).

The Chitin-binding type-1 domain maps to 1–42; the sequence is EQCGRQAGGALCPGGLCCSQFGWCGSTADYCTVPGCQSQCSG. 7 disulfides stabilise this stretch: Cys3–Cys18, Cys12–Cys24, Cys17–Cys31, Cys36–Cys40, Cys73–Cys136, Cys148–Cys156, and Cys255–Cys287. Glu117 serves as the catalytic Proton donor. The propeptide at 296–302 is removed in mature form; the sequence is GVSVDSM.

It belongs to the glycosyl hydrolase 19 family. Chitinase class I subfamily.

The catalysed reaction is Random endo-hydrolysis of N-acetyl-beta-D-glucosaminide (1-&gt;4)-beta-linkages in chitin and chitodextrins.. Its function is as follows. Defense against chitin-containing fungal pathogens. The polypeptide is Endochitinase 2 (Gossypium hirsutum (Upland cotton)).